The chain runs to 242 residues: Probable transcriptional regulatory protein HEAR0561 (242 aa).

Belongs to the TACO1 family.

The protein localises to the cytoplasm. The protein is Probable transcriptional regulatory protein HEAR0561 of Herminiimonas arsenicoxydans.